A 668-amino-acid chain; its full sequence is Auxilin-like clathrin uncoating factor SWA2 (668 aa).

A disordered region spans residues 1–95 (MSDPFAHLLT…ANNTPPSALA (95 aa)). Residues 1-100 (MSDPFAHLLT…PSALANTDDD (100 aa)) form a CB1 region. Positions 17–36 (SASASKETTPQSSNSPSITG) are enriched in polar residues. Ser52 and Ser64 each carry phosphoserine. A compositionally biased stretch (low complexity) spans 76–92 (PTNSTTKSNTANNTPPS). The 41-residue stretch at 140-180 (DEVKDMEIARLMSLGLSIEEATEFYENDVTYERYLEILKSK) folds into the UBA domain. The tract at residues 238 to 302 (EANDRLNNYS…FETKIDITKR (65 aa)) is CB2. 3 positions are modified to phosphoserine: Ser264, Ser308, and Ser312. Disordered stretches follow at residues 302–323 (RTAP…EENS) and 339–359 (EGNL…ENSN). The CB3 stretch occupies residues 303–362 (TAPDVSHSSSPTSGILIEENSRRNEPLIEDSLLDFSEGNLTNSKSNEDSTLFNENSNTDS). The span at 340-359 (GNLTNSKSNEDSTLFNENSN) shows a compositional bias: polar residues. 3 TPR repeats span residues 374–407 (YNEF…LPLN), 412–445 (IIAL…FPSS), and 467–500 (PKIM…NFFD). The interval 511–556 (QDFINPPPVKKSMPVKKKTTTTSPATKKQNLTASSSNSPISVDSTS) is disordered. The segment covering 539-555 (QNLTASSSNSPISVDST) has biased composition (polar residues). A J domain is found at 603-668 (CNWKDVSMQD…DKFKLQNDIN (66 aa)).

Interacts with the clathrin light and heavy chains CLC1 and CHC1, respectively. Binds to clathrin with its N-terminal domain containing 3 clathrin-binding (CB) motifs. Association with clathrin is transient. Binds to polyubiquitin and ubiquitinated proteins.

The protein resides in the cytoplasm. The protein localises to the endoplasmic reticulum membrane. In terms of biological role, cofactor for the uncoating of clathrin-coated vesicles (CCVs) by Hsp70-type chaperones (SSA1/2/3 and SSB1/2). Coat disassembly is important for fusion of vesicles with target membranes and for recycling components of clathrin coats to the cytoplasm for further rounds of vesicle formation. Binds to assembled clathrin and recruits the ATP-activated chaperone to CCVs. Stimulates the ATPase activity of the clathrin-associated Hsp70-type chaperone SSA1, which then disrupts clathrin-clathrin interactions, leading to release of the clathrin coat. In addition, prevents unproductive clathrin assembly in the cell. Also required for cortical endoplasmic reticulum inheritance. The chain is Auxilin-like clathrin uncoating factor SWA2 (SWA2) from Saccharomyces cerevisiae (strain ATCC 204508 / S288c) (Baker's yeast).